The sequence spans 160 residues: uncharacterized protein (160 aa).

The stretch at 69 to 145 (NQLLNMMAQA…EQREHVKEQR (77 aa)) forms a coiled coil. Disordered regions lie at residues 82–109 (GVRLQGRRQKKINPKRLQRQVSKELKNA) and 129–160 (KKKQIMKEQREHVKEQRYMLKKQKAKKKHRGK). Basic residues predominate over residues 86 to 99 (QGRRQKKINPKRLQ). Positions 133–146 (IMKEQREHVKEQRY) are enriched in basic and acidic residues. Positions 147 to 160 (MLKKQKAKKKHRGK) are enriched in basic residues.

This is an uncharacterized protein from Bacillus subtilis (strain 168).